A 429-amino-acid polypeptide reads, in one-letter code: L-threonine dehydratase biosynthetic IlvA (429 aa).

Lys66 is modified (N6-(pyridoxal phosphate)lysine). Residues Asn93, 196–200, and Ser322 each bind pyridoxal 5'-phosphate; that span reads GGGGC. The region spanning 346 to 420 is the ACT-like domain; that stretch reads HYFLVDFPQE…TDIHVEALEP (75 aa).

This sequence belongs to the serine/threonine dehydratase family. Homotetramer. The cofactor is pyridoxal 5'-phosphate.

It catalyses the reaction L-threonine = 2-oxobutanoate + NH4(+). Its pathway is amino-acid biosynthesis; L-isoleucine biosynthesis; 2-oxobutanoate from L-threonine: step 1/1. Catalyzes the anaerobic formation of alpha-ketobutyrate and ammonia from threonine in a two-step reaction. The first step involved a dehydration of threonine and a production of enamine intermediates (aminocrotonate), which tautomerizes to its imine form (iminobutyrate). Both intermediates are unstable and short-lived. The second step is the nonenzymatic hydrolysis of the enamine/imine intermediates to form 2-ketobutyrate and free ammonia. In the low water environment of the cell, the second step is accelerated by RidA. The sequence is that of L-threonine dehydratase biosynthetic IlvA (ilvA) from Mycobacterium bovis (strain ATCC BAA-935 / AF2122/97).